A 938-amino-acid polypeptide reads, in one-letter code: Isoleucine--tRNA ligase (938 aa).

The 'HIGH' region motif lies at 58 to 68 (PYANGNIHIGH). Glu562 serves as a coordination point for L-isoleucyl-5'-AMP. The 'KMSKS' region motif lies at 603 to 607 (KMSKS). Residue Lys606 coordinates ATP. Zn(2+) contacts are provided by Cys901, Cys904, Cys921, and Cys924.

It belongs to the class-I aminoacyl-tRNA synthetase family. IleS type 1 subfamily. As to quaternary structure, monomer. Zn(2+) is required as a cofactor.

The protein localises to the cytoplasm. The catalysed reaction is tRNA(Ile) + L-isoleucine + ATP = L-isoleucyl-tRNA(Ile) + AMP + diphosphate. Its function is as follows. Catalyzes the attachment of isoleucine to tRNA(Ile). As IleRS can inadvertently accommodate and process structurally similar amino acids such as valine, to avoid such errors it has two additional distinct tRNA(Ile)-dependent editing activities. One activity is designated as 'pretransfer' editing and involves the hydrolysis of activated Val-AMP. The other activity is designated 'posttransfer' editing and involves deacylation of mischarged Val-tRNA(Ile). In Actinobacillus pleuropneumoniae serotype 5b (strain L20), this protein is Isoleucine--tRNA ligase.